A 234-amino-acid chain; its full sequence is Purine nucleoside phosphorylase DeoD-type (234 aa).

A purine D-ribonucleoside is bound at residue histidine 4. Residues glycine 20, arginine 24, arginine 43, and 87–90 (RIGS) each bind phosphate. Residues 179-181 (DME) and 203-204 (SD) each bind a purine D-ribonucleoside. Residue aspartate 204 is the Proton donor of the active site.

The protein belongs to the PNP/UDP phosphorylase family. In terms of assembly, homohexamer; trimer of homodimers.

The enzyme catalyses a purine D-ribonucleoside + phosphate = a purine nucleobase + alpha-D-ribose 1-phosphate. It catalyses the reaction a purine 2'-deoxy-D-ribonucleoside + phosphate = a purine nucleobase + 2-deoxy-alpha-D-ribose 1-phosphate. Catalyzes the reversible phosphorolytic breakdown of the N-glycosidic bond in the beta-(deoxy)ribonucleoside molecules, with the formation of the corresponding free purine bases and pentose-1-phosphate. The sequence is that of Purine nucleoside phosphorylase DeoD-type from Shewanella oneidensis (strain ATCC 700550 / JCM 31522 / CIP 106686 / LMG 19005 / NCIMB 14063 / MR-1).